A 255-amino-acid chain; its full sequence is Ditrans,polycis-undecaprenyl-diphosphate synthase ((2E,6E)-farnesyl-diphosphate specific) (255 aa).

Residue aspartate 21 is part of the active site. Aspartate 21 serves as a coordination point for Mg(2+). Residues glycine 22–arginine 25, tryptophan 26, arginine 34, histidine 38, and serine 66–glutamate 68 each bind substrate. Asparagine 69 serves as the catalytic Proton acceptor. Substrate contacts are provided by residues tryptophan 70, arginine 72, arginine 189, and arginine 195–serine 197. Residue glutamate 208 coordinates Mg(2+).

Belongs to the UPP synthase family. As to quaternary structure, homodimer. Mg(2+) is required as a cofactor.

It carries out the reaction 8 isopentenyl diphosphate + (2E,6E)-farnesyl diphosphate = di-trans,octa-cis-undecaprenyl diphosphate + 8 diphosphate. Functionally, catalyzes the sequential condensation of isopentenyl diphosphate (IPP) with (2E,6E)-farnesyl diphosphate (E,E-FPP) to yield (2Z,6Z,10Z,14Z,18Z,22Z,26Z,30Z,34E,38E)-undecaprenyl diphosphate (di-trans,octa-cis-UPP). UPP is the precursor of glycosyl carrier lipid in the biosynthesis of bacterial cell wall polysaccharide components such as peptidoglycan and lipopolysaccharide. This is Ditrans,polycis-undecaprenyl-diphosphate synthase ((2E,6E)-farnesyl-diphosphate specific) from Xylella fastidiosa (strain Temecula1 / ATCC 700964).